Consider the following 30-residue polypeptide: Photosystem I reaction center subunit XII (30 aa).

Residues 7-26 (IFVALLFALVSAVLAIRLGT) form a helical membrane-spanning segment.

The protein belongs to the PsaM family.

The protein localises to the plastid. Its subcellular location is the chloroplast thylakoid membrane. This Gracilaria tenuistipitata var. liui (Red alga) protein is Photosystem I reaction center subunit XII.